Reading from the N-terminus, the 137-residue chain is Large ribosomal subunit protein eL32 (137 aa).

The segment at 95 to 137 (PSAAEIATPVSSRKRIASSPARQADRCSRSRRSKFRPRRLRAS) is disordered. Over residues 123-137 (RSRRSKFRPRRLRAS) the composition is skewed to basic residues.

It belongs to the eukaryotic ribosomal protein eL32 family.

In Trichoderma harzianum (Hypocrea lixii), this protein is Large ribosomal subunit protein eL32 (rpl32).